Consider the following 462-residue polypeptide: Cysteine--tRNA ligase (462 aa).

Position 24 (C24) interacts with Zn(2+). The 'HIGH' region signature appears at 26–36; sequence PTVYDDAHLGH. Residues C199, H224, and E228 each coordinate Zn(2+). The 'KMSKS' region motif lies at 256–260; the sequence is KMSKS. K259 provides a ligand contact to ATP.

It belongs to the class-I aminoacyl-tRNA synthetase family. Monomer. The cofactor is Zn(2+).

It is found in the cytoplasm. It catalyses the reaction tRNA(Cys) + L-cysteine + ATP = L-cysteinyl-tRNA(Cys) + AMP + diphosphate. The sequence is that of Cysteine--tRNA ligase from Campylobacter jejuni subsp. doylei (strain ATCC BAA-1458 / RM4099 / 269.97).